Here is a 151-residue protein sequence, read N- to C-terminus: Odorant-binding protein (151 aa).

2 cysteine pairs are disulfide-bonded: cysteine 38–cysteine 42 and cysteine 57–cysteine 149.

The protein belongs to the calycin superfamily. Lipocalin family. Expressed in salivary glands, hair and urine.

Its subcellular location is the secreted. Functionally, may act as a pheromone. This is Odorant-binding protein from Phodopus sungorus (Striped hairy-footed hamster).